The sequence spans 151 residues: Ubiquitin-conjugating enzyme E2 2 (151 aa).

The UBC core domain occupies 4 to 150 (AARRRLMRDF…VRETVERSWE (147 aa)). Catalysis depends on cysteine 88, which acts as the Glycyl thioester intermediate.

Belongs to the ubiquitin-conjugating enzyme family.

It localises to the cytoplasm. Its subcellular location is the nucleus. The enzyme catalyses S-ubiquitinyl-[E1 ubiquitin-activating enzyme]-L-cysteine + [E2 ubiquitin-conjugating enzyme]-L-cysteine = [E1 ubiquitin-activating enzyme]-L-cysteine + S-ubiquitinyl-[E2 ubiquitin-conjugating enzyme]-L-cysteine.. Its pathway is protein modification; protein ubiquitination. Functionally, catalyzes the covalent attachment of ubiquitin to other proteins. Plays a role in transcription regulation by catalyzing the monoubiquitination of histone H2B to form H2BK123ub1. H2BK123ub1 gives a specific tag for epigenetic transcriptional activation and is also a prerequisite for H3K4me and H3K79me formation. Also involved in postreplication repair of UV-damaged DNA, in N-end rule-dependent protein degradation and in sporulation. This chain is Ubiquitin-conjugating enzyme E2 2 (UBC2), found in Trichoderma harzianum (Hypocrea lixii).